The chain runs to 1233 residues: Structural maintenance of chromosomes protein 1A (1233 aa).

Residue 32 to 39 (GPNGSGKS) coordinates ATP. Coiled-coil stretches lie at residues 104-124 (EYKINNKVVQLHEYSEELEKL) and 163-503 (ELAQ…KAEI). A compositionally biased stretch (basic and acidic residues) spans 284–293 (IKEKDSELNQ). 2 disordered regions span residues 284 to 308 (IKEKDSELNQKRPQYIKAKENTSHK) and 348 to 369 (QEFEERMEEESQSQGRDLTLEE). Phosphoserine is present on residues Ser358 and Ser360. The 115-residue stretch at 515-629 (VYGRLIDLCQ…DNVEDARRIA (115 aa)) folds into the SMC hinge domain. 2 positions are modified to N6-acetyllysine: Lys648 and Lys713. The stretch at 660-935 (KAKARRWDEK…RHNLLQACKM (276 aa)) forms a coiled coil. The interval 947–968 (MDDISQEEGSSQGEDSVSGSQR) is disordered. Residues 953–967 (EEGSSQGEDSVSGSQ) show a composition bias toward low complexity. Residues Ser957, Ser962, Ser966, and Ser970 each carry the phosphoserine modification. Residues 991-1068 (KDAQAEEEIK…FEQIKKERFD (78 aa)) adopt a coiled-coil conformation. Position 1037 is an N6-acetyllysine (Lys1037).

Belongs to the SMC family. SMC1 subfamily. In terms of assembly, forms a heterodimer with SMC3 in cohesin complexes. Cohesin complexes are composed of the SMC1 (SMC1A or meiosis-specific SMC1B) and SMC3 heterodimer attached via their SMC hinge domain, RAD21 which link them, and one STAG protein (STAG1, STAG2 or meiosis-specific STAG3), which interacts with RAD21. In germ cell cohesin complexes, SMC1A is mutually exclusive with SMC1B. Found in a complex with CDCA5, SMC3 and RAD21, PDS5A/SCC-112 and PDS5B/APRIN. Interacts with NDC80, SYCP2, STAG3, BRCA1 and BRAT1. The cohesin complex interacts with the cohesin loading complex subunits NIPBL/Scc2 (via HEAT repeats) and MAU2/Scc4. NIPBL directly contacts all members of the complex, RAD21, SMC1A/B, SMC3 and STAG1. Interacts with RPGR. Found in a complex containing POLE and SMC3. In terms of processing, phosphorylated upon ionizing radiation or DNA methylation. Phosphorylation of Ser-957 and Ser-966 activates it and is required for S-phase checkpoint activation. Ubiquitinated by the DCX(DCAF15) complex, leading to its degradation.

It localises to the nucleus. Its subcellular location is the chromosome. It is found in the centromere. In terms of biological role, involved in chromosome cohesion during cell cycle and in DNA repair. Involved in DNA repair via its interaction with BRCA1 and its related phosphorylation by ATM, and works as a downstream effector in the ATM/NBS1 branch of S-phase checkpoint. Central component of cohesin complex. The cohesin complex is required for the cohesion of sister chromatids after DNA replication. The cohesin complex apparently forms a large proteinaceous ring within which sister chromatids can be trapped. At anaphase, the complex is cleaved and dissociates from chromatin, allowing sister chromatids to segregate. The cohesin complex may also play a role in spindle pole assembly during mitosis. Involved in DNA repair via its interaction with BRCA1 and its related phosphorylation by ATM, or via its phosphorylation by ATR. Works as a downstream effector both in the ATM/NBS1 branch and in the ATR/MSH2 branch of S-phase checkpoint. This Bos taurus (Bovine) protein is Structural maintenance of chromosomes protein 1A (SMC1A).